The primary structure comprises 206 residues: Ras-related protein Rab-18 (206 aa).

M1 bears the N-acetylmethionine mark. Residues S17, G20, K21, S22, S23, D34, P35, T40, G66, K123, and D125 each contribute to the GTP site. S22 provides a ligand contact to Mg(2+). Short sequence motifs (switch) lie at residues 31–45 (DTFDPELAATIGVDF) and 63–80 (DTAGQERFRTLTPSYYRG). Residue T40 participates in Mg(2+) binding. S144 bears the Phosphoserine mark. GTP is bound at residue A152. A lipid anchor (S-palmitoyl cysteine) is attached at C199. C203 is subject to Cysteine methyl ester. C203 is lipidated: S-geranylgeranyl cysteine. Residues 204 to 206 (SVL) constitute a propeptide, removed in mature form.

The protein belongs to the small GTPase superfamily. Rab family. Interacts (in GTP-bound form) with ZFYVE1. Interacts with ZW10 and this interaction is enhanced in the presence of ZFYVE1. Interacts with BSCL2. The cofactor is Mg(2+).

It localises to the endoplasmic reticulum membrane. It is found in the golgi apparatus. The protein resides in the cis-Golgi network membrane. The protein localises to the lipid droplet. Its subcellular location is the apical cell membrane. It catalyses the reaction GTP + H2O = GDP + phosphate + H(+). Its activity is regulated as follows. Regulated by guanine nucleotide exchange factors (GEFs) which promote the exchange of bound GDP for free GTP. Regulated by GTPase activating proteins (GAPs) which increase the GTP hydrolysis activity at the ER membrane. Inhibited by GDP dissociation inhibitors (GDIs) which prevent Rab-GDP dissociation. Its function is as follows. The small GTPases Rab are key regulators of intracellular membrane trafficking, from the formation of transport vesicles to their fusion with membranes. Rabs cycle between an inactive GDP-bound form and an active GTP-bound form that is able to recruit to membranes different sets of downstream effectors directly responsible for vesicle formation, movement, tethering and fusion. RAB18 is required for the localization of ZFYVE1 to lipid droplets and for its function in mediating the formation of endoplasmic reticulum-lipid droplets (ER-LD) contacts. Also required for maintaining endoplasmic reticulum structure. Plays a role in apical endocytosis/recycling. Plays a key role in eye and brain development and neurodegeneration. The sequence is that of Ras-related protein Rab-18 from Rattus norvegicus (Rat).